Here is a 343-residue protein sequence, read N- to C-terminus: Dihydroorotate dehydrogenase (quinone) (343 aa).

Residues 61–65 and Thr-85 each bind FMN; that span reads AGLDK. Lys-65 is a binding site for substrate. Substrate is bound at residue 110-114; it reads NRMGF. Residues Asn-138 and Asn-171 each coordinate FMN. Asn-171 contributes to the substrate binding site. The active-site Nucleophile is Ser-174. Residue Asn-176 coordinates substrate. Residues Lys-216 and Thr-244 each contribute to the FMN site. Position 245-246 (245-246) interacts with substrate; that stretch reads NT. FMN-binding positions include Gly-267, Gly-296, and 317-318; that span reads YS.

The protein belongs to the dihydroorotate dehydrogenase family. Type 2 subfamily. As to quaternary structure, monomer. It depends on FMN as a cofactor.

The protein localises to the cell membrane. It catalyses the reaction (S)-dihydroorotate + a quinone = orotate + a quinol. Its pathway is pyrimidine metabolism; UMP biosynthesis via de novo pathway; orotate from (S)-dihydroorotate (quinone route): step 1/1. Catalyzes the conversion of dihydroorotate to orotate with quinone as electron acceptor. The sequence is that of Dihydroorotate dehydrogenase (quinone) from Pseudomonas syringae pv. tomato (strain ATCC BAA-871 / DC3000).